The following is a 442-amino-acid chain: ATP-dependent protease ATPase subunit HslU (442 aa).

ATP-binding positions include isoleucine 18 and 60–65 (GVGKTE). The interval 137–156 (PKPKNDWESTETDSSSNTRQ) is disordered. 3 residues coordinate ATP: aspartate 255, glutamate 320, and arginine 392.

This sequence belongs to the ClpX chaperone family. HslU subfamily. A double ring-shaped homohexamer of HslV is capped on each side by a ring-shaped HslU homohexamer. The assembly of the HslU/HslV complex is dependent on binding of ATP.

The protein resides in the cytoplasm. Functionally, ATPase subunit of a proteasome-like degradation complex; this subunit has chaperone activity. The binding of ATP and its subsequent hydrolysis by HslU are essential for unfolding of protein substrates subsequently hydrolyzed by HslV. HslU recognizes the N-terminal part of its protein substrates and unfolds these before they are guided to HslV for hydrolysis. The chain is ATP-dependent protease ATPase subunit HslU from Shewanella baltica (strain OS155 / ATCC BAA-1091).